Here is a 505-residue protein sequence, read N- to C-terminus: Olfactomedin-4 (505 aa).

The first 18 residues, 1–18, serve as a signal peptide directing secretion; sequence MSYSLLFLLALQFCLGSA. N-linked (GlcNAc...) asparagine glycans are attached at residues asparagine 64 and asparagine 128. The stretch at 174-225 forms a coiled coil; that stretch reads HIIDMLEVEIRNMTLLVEKLESLDQNNVLSIRRQILALKTKLKECEASKSDL. The 263-residue stretch at 237–499 folds into the Olfactomedin-like domain; that stretch reads SCSHGGVVNI…LLNYDLVFLQ (263 aa). A disulfide bridge links cysteine 238 with cysteine 429.

Homomultimer; disulfide-linked. Interacts with NDUFA13. Interacts with cell surface lectins (locutions ricinus communis agglutinin I, concanavalin A and wheat germ agglutinin) and cadherin. Post-translationally, N-glycosylated.

It is found in the secreted. It localises to the extracellular space. The protein localises to the mitochondrion. In terms of biological role, may promote proliferation of pancreatic cancer cells by favoring the transition from the S to G2/M phase. In myeloid leukemic cell lines, inhibits cell growth and induces cell differentiation and apoptosis. May play a role in the inhibition of EIF4EBP1 phosphorylation/deactivation. Facilitates cell adhesion, most probably through interaction with cell surface lectins and cadherin. The sequence is that of Olfactomedin-4 (Olfm4) from Mus musculus (Mouse).